Consider the following 193-residue polypeptide: Probable 3' cyclic ADP-D-ribose synthase ThsB' (193 aa).

Homodimer.

The enzyme catalyses NAD(+) = 3'cADPR + nicotinamide + H(+). TIR-like domain-containing component of the Thoeris antiviral defense system, composed of ThsA and ThsB and ThsB'. In the presence of NAD(+) produces a signaling molecule that activates cognate ThsA (AC J8G6Z1) to hydrolyze NAD(+). The signaling molecule is a cyclic ADP-D-ribose isomer and may be 3' cyclic ADP-D-ribose (3'cADPR); it is not 2'cADPR. The polypeptide is Probable 3' cyclic ADP-D-ribose synthase ThsB' (Bacillus cereus (strain MSX-D12)).